The primary structure comprises 110 residues: Large ribosomal subunit protein uL22 (110 aa).

Belongs to the universal ribosomal protein uL22 family. As to quaternary structure, part of the 50S ribosomal subunit.

In terms of biological role, this protein binds specifically to 23S rRNA; its binding is stimulated by other ribosomal proteins, e.g. L4, L17, and L20. It is important during the early stages of 50S assembly. It makes multiple contacts with different domains of the 23S rRNA in the assembled 50S subunit and ribosome. Its function is as follows. The globular domain of the protein is located near the polypeptide exit tunnel on the outside of the subunit, while an extended beta-hairpin is found that lines the wall of the exit tunnel in the center of the 70S ribosome. This Yersinia enterocolitica serotype O:8 / biotype 1B (strain NCTC 13174 / 8081) protein is Large ribosomal subunit protein uL22.